Consider the following 1190-residue polypeptide: Laminin subunit gamma-2 (1190 aa).

The first 21 residues, 1 to 21 (MPALWLRCGLCLALLLPAARA), serve as a signal peptide directing secretion. Disulfide bonds link Cys-28–Cys-37, Cys-30–Cys-53, Cys-56–Cys-65, Cys-68–Cys-81, Cys-84–Cys-96, Cys-86–Cys-102, Cys-104–Cys-113, Cys-116–Cys-128, Cys-139–Cys-150, Cys-141–Cys-155, Cys-157–Cys-166, and Cys-169–Cys-184. Laminin EGF-like domains follow at residues 28-83 (CDCN…RCLP), 84-130 (CNCN…GCAQ), and 139-186 (CDCD…GCTQ). The Laminin EGF-like 4; first part domain maps to 187-196 (CFCYGHSASC). Residues 213–381 (QDVDGWKAVQ…SGAPAPWVEQ (169 aa)) form the Laminin IV type A domain. 2 N-linked (GlcNAc...) asparagine glycosylation sites follow: Asn-342 and Asn-362. A Laminin EGF-like 4; second part domain is found at 382–415 (CVCPVGYKGQFCQDCASGYKRDSARLGPFGTCIP). Laminin EGF-like domains lie at 416 to 462 (CNCQ…SCKP), 463 to 517 (CPCR…PCQP), and 518 to 573 (CQCN…KCRA). 11 disulfides stabilise this stretch: Cys-463–Cys-471, Cys-465–Cys-482, Cys-485–Cys-494, Cys-497–Cys-515, Cys-518–Cys-532, Cys-520–Cys-539, Cys-542–Cys-551, Cys-554–Cys-571, Cys-574–Cys-586, Cys-576–Cys-592, and Cys-594–Cys-603. A Laminin EGF-like 8; truncated domain is found at 574-603 (CNCNPVGSEPVECRSDGSCVCKPGFGGLSC). The domain II and I stretch occupies residues 604–1190 (EHAALTSCPA…CYNTQALEQQ (587 aa)). Positions 613–718 (ACYNQVKVQM…GSQYQNQVQD (106 aa)) form a coiled coil. Ser-803 carries O-linked (Xyl...) (chondroitin sulfate) serine glycosylation. Coiled coils occupy residues 809-1073 (AVVQ…AVQM) and 1114-1190 (EERL…LEQQ). N-linked (GlcNAc...) asparagine glycosylation is found at Asn-939 and Asn-1030.

In terms of assembly, laminin is a complex glycoprotein, consisting of three different polypeptide chains (alpha, beta, gamma), which are bound to each other by disulfide bonds into a cross-shaped molecule comprising one long and three short arms with globules at each end. Gamma-2 is a subunit of laminin-5 (laminin-332 or epiligrin/kalinin/nicein). Post-translationally, O-glycosylated; contains chondroitin sulfate (CS).

It localises to the secreted. The protein resides in the extracellular space. Its subcellular location is the extracellular matrix. It is found in the basement membrane. Binding to cells via a high affinity receptor, laminin is thought to mediate the attachment, migration and organization of cells into tissues during embryonic development by interacting with other extracellular matrix components. Ladsin exerts cell-scattering activity toward a wide variety of cells, including epithelial, endothelial, and fibroblastic cells. The sequence is that of Laminin subunit gamma-2 (LAMC2) from Equus caballus (Horse).